Here is a 92-residue protein sequence, read N- to C-terminus: Small ribosomal subunit protein uS19c (92 aa).

This sequence belongs to the universal ribosomal protein uS19 family.

It is found in the plastid. It localises to the chloroplast. Its function is as follows. Protein S19 forms a complex with S13 that binds strongly to the 16S ribosomal RNA. This is Small ribosomal subunit protein uS19c from Phaseolus angularis (Azuki bean).